Consider the following 187-residue polypeptide: Oligoribonuclease (187 aa).

An Exonuclease domain is found at leucine 7–leucine 170. Tyrosine 128 is an active-site residue.

This sequence belongs to the oligoribonuclease family.

Its subcellular location is the cytoplasm. In terms of biological role, 3'-to-5' exoribonuclease specific for small oligoribonucleotides. The chain is Oligoribonuclease from Legionella pneumophila (strain Paris).